The sequence spans 256 residues: Ribosomal RNA small subunit methyltransferase J (256 aa).

S-adenosyl-L-methionine contacts are provided by residues Arg104–Asp105, Glu120–Arg121, Ser156–Ser157, and Asp174.

This sequence belongs to the methyltransferase superfamily. RsmJ family.

The protein localises to the cytoplasm. It carries out the reaction guanosine(1516) in 16S rRNA + S-adenosyl-L-methionine = N(2)-methylguanosine(1516) in 16S rRNA + S-adenosyl-L-homocysteine + H(+). Its function is as follows. Specifically methylates the guanosine in position 1516 of 16S rRNA. This is Ribosomal RNA small subunit methyltransferase J from Yersinia pseudotuberculosis serotype O:3 (strain YPIII).